A 95-amino-acid polypeptide reads, in one-letter code: MAVETIQKPETTTKRKIAPRYRVLLHNDDFNPMEYVVMVLMQTVPSLTQPQAVDIMMEAHTNGTGLVITCDIEPAEFYCEQLKSHGLSSSIEPDD.

It belongs to the ClpS family. As to quaternary structure, binds to the N-terminal domain of the chaperone ClpA.

In terms of biological role, involved in the modulation of the specificity of the ClpAP-mediated ATP-dependent protein degradation. The protein is ATP-dependent Clp protease adapter protein ClpS of Synechococcus elongatus (strain ATCC 33912 / PCC 7942 / FACHB-805) (Anacystis nidulans R2).